The sequence spans 834 residues: Semaphorin-4C (834 aa).

A signal peptide spans 1–20 (MAPHWAVWLLAAGLWGLGIG). Residues 21–664 (AEMWWNLVPR…EARAPLENLG (644 aa)) lie on the Extracellular side of the membrane. One can recognise a Sema domain in the interval 30–497 (RKTVSSGELV…SRSQLVQLSL (468 aa)). The interval 46–489 (SQTGIQDFLT…SKKVLFAGSR (444 aa)) is dominant negative effect on myogenic differentiation. Cysteines 99 and 110 form a disulfide. Asn106 and Asn121 each carry an N-linked (GlcNAc...) asparagine glycan. Disulfide bonds link Cys128–Cys137, Cys261–Cys370, and Cys285–Cys330. Residues Asn310 and Asn419 are each glycosylated (N-linked (GlcNAc...) asparagine). A PSI domain is found at 499-552 (DCTKYRFCVDCVLARDPYCAWNVNTSRCVATTSGRSGSFLVQHVANLDTSKMCN). 2 disulfides stabilise this stretch: Cys500-Cys517 and Cys509-Cys526. Residues Asn522 and Asn565 are each glycosylated (N-linked (GlcNAc...) asparagine). Positions 557 to 645 (KKVRSIPKNI…RLAAESYLVA (89 aa)) constitute an Ig-like C2-type domain. Cys578 and Cys628 are disulfide-bonded. Residues 665-685 (LVWLAVVALGAVCLVLLLLVL) form a helical membrane-spanning segment. Topologically, residues 686–834 (SLRRRLREEL…PDSNPEESSV (149 aa)) are cytoplasmic. Ser743 is subject to Phosphoserine. A disordered region spans residues 749–834 (GHARCQPGGG…PDSNPEESSV (86 aa)). The segment covering 757–773 (GGPPSPPPGIPGQPLPS) has biased composition (pro residues). The short motif at 831–834 (ESSV) is the PDZ-binding element.

This sequence belongs to the semaphorin family. As to quaternary structure, interacts (via the PDZ-binding motif) with GIPC (via the PDZ domain). Interacts with NCDN. Interacts (via the PDZ-binding motif) with DLG4. Interacts with PLXNB2. Predominantly expressed in brain (at protein level).

Its subcellular location is the postsynaptic density membrane. The protein resides in the cytoplasmic vesicle. It localises to the secretory vesicle. The protein localises to the synaptic vesicle membrane. In terms of biological role, cell surface receptor for PLXNB2 that plays an important role in cell-cell signaling. PLXNB2 binding promotes downstream activation of RHOA and phosphorylation of ERBB2 at 'Tyr-1248'. Required for normal brain development, axon guidance and cell migration. Probable signaling receptor which may play a role in myogenic differentiation through activation of the stress-activated MAPK cascade. This chain is Semaphorin-4C (Sema4c), found in Mus musculus (Mouse).